The primary structure comprises 215 residues: Cytochrome b6 (215 aa).

The chain crosses the membrane as a helical span at residues 32-52 (IFYCLGGITLTCFLVQVATGF). Cysteine 35 serves as a coordination point for heme c. Heme b is bound by residues histidine 86 and histidine 100. Helical transmembrane passes span 90 to 110 (ASMM…TGGF), 116 to 136 (LTWV…VTGY), and 186 to 206 (LHTF…FLMI). Heme b is bound by residues histidine 187 and histidine 202.

Belongs to the cytochrome b family. PetB subfamily. The 4 large subunits of the cytochrome b6-f complex are cytochrome b6, subunit IV (17 kDa polypeptide, PetD), cytochrome f and the Rieske protein, while the 4 small subunits are PetG, PetL, PetM and PetN. The complex functions as a dimer. The cofactor is heme b. Heme c is required as a cofactor.

The protein resides in the plastid. Its subcellular location is the chloroplast thylakoid membrane. Component of the cytochrome b6-f complex, which mediates electron transfer between photosystem II (PSII) and photosystem I (PSI), cyclic electron flow around PSI, and state transitions. The protein is Cytochrome b6 of Pinus thunbergii (Japanese black pine).